The following is a 421-amino-acid chain: UDP-N-acetylglucosamine 1-carboxyvinyltransferase (421 aa).

Residue 22 to 23 coordinates phosphoenolpyruvate; the sequence is KN. Arg-93 serves as a coordination point for UDP-N-acetyl-alpha-D-glucosamine. Cys-117 serves as the catalytic Proton donor. Cys-117 carries the post-translational modification 2-(S-cysteinyl)pyruvic acid O-phosphothioketal. Residues 122 to 126, Asp-308, and Ile-330 each bind UDP-N-acetyl-alpha-D-glucosamine; that span reads RPVDL.

This sequence belongs to the EPSP synthase family. MurA subfamily.

The protein localises to the cytoplasm. The enzyme catalyses phosphoenolpyruvate + UDP-N-acetyl-alpha-D-glucosamine = UDP-N-acetyl-3-O-(1-carboxyvinyl)-alpha-D-glucosamine + phosphate. Its pathway is cell wall biogenesis; peptidoglycan biosynthesis. Its function is as follows. Cell wall formation. Adds enolpyruvyl to UDP-N-acetylglucosamine. The polypeptide is UDP-N-acetylglucosamine 1-carboxyvinyltransferase (Pseudomonas putida (strain ATCC 700007 / DSM 6899 / JCM 31910 / BCRC 17059 / LMG 24140 / F1)).